The sequence spans 250 residues: MYKLVLMRHGESQWNLENRFTGWTDVDLTEVGREQARRAGELLKREGYTFDLAYASVLKRAIRTLWIALDAMDAMYTPVGLNWRLNERHYGQLQGLNKAETAAKYGDEQVLIWRRAYAIAPEPLDIDDPRHPRFDSRYAKIPAEQLPATECLRDTVARVLPFWNESIAPAIRAGRRVLVAAHGNSLRALIKHLDNISDDAIVELNIPTGQPLVYELDENLRPIRHYYLGDAAEIEAAMAAVAAQGKAKKD.

Substrate contacts are provided by residues 8–15 (RHGESQWN), 21–22 (TG), Arg60, 87–90 (ERHY), Lys98, 114–115 (RR), and 183–184 (GN). The Tele-phosphohistidine intermediate role is filled by His9. Glu87 functions as the Proton donor/acceptor in the catalytic mechanism.

This sequence belongs to the phosphoglycerate mutase family. BPG-dependent PGAM subfamily. In terms of assembly, homodimer.

The enzyme catalyses (2R)-2-phosphoglycerate = (2R)-3-phosphoglycerate. Its pathway is carbohydrate degradation; glycolysis; pyruvate from D-glyceraldehyde 3-phosphate: step 3/5. In terms of biological role, catalyzes the interconversion of 2-phosphoglycerate and 3-phosphoglycerate. The sequence is that of 2,3-bisphosphoglycerate-dependent phosphoglycerate mutase from Bordetella avium (strain 197N).